Here is a 387-residue protein sequence, read N- to C-terminus: Small ribosomal subunit biogenesis GTPase RsgA (387 aa).

The CP-type G domain occupies 112-273 (YDGLKPVAAN…LIDSPGVREF (162 aa)). Residues 159–162 (NKID) and 213–221 (GQSGVGKSS) contribute to the GTP site. Residues C297, C302, H304, and C310 each coordinate Zn(2+).

This sequence belongs to the TRAFAC class YlqF/YawG GTPase family. RsgA subfamily. As to quaternary structure, monomer. Associates with 30S ribosomal subunit, binds 16S rRNA. Zn(2+) serves as cofactor.

It is found in the cytoplasm. Its function is as follows. One of several proteins that assist in the late maturation steps of the functional core of the 30S ribosomal subunit. Helps release RbfA from mature subunits. May play a role in the assembly of ribosomal proteins into the subunit. Circularly permuted GTPase that catalyzes slow GTP hydrolysis, GTPase activity is stimulated by the 30S ribosomal subunit. The polypeptide is Small ribosomal subunit biogenesis GTPase RsgA (Vibrio cholerae serotype O1 (strain ATCC 39315 / El Tor Inaba N16961)).